The sequence spans 39 residues: Cytochrome b6-f complex subunit 5 (39 aa).

Residues 5–25 (LLCGIVLGLVPITLLGLFVSA) form a helical membrane-spanning segment.

This sequence belongs to the PetG family. In terms of assembly, the 4 large subunits of the cytochrome b6-f complex are cytochrome b6, subunit IV (17 kDa polypeptide, PetD), cytochrome f and the Rieske protein, while the 4 small subunits are PetG, PetL, PetM and PetN. The complex functions as a dimer.

The protein resides in the cellular thylakoid membrane. Its function is as follows. Component of the cytochrome b6-f complex, which mediates electron transfer between photosystem II (PSII) and photosystem I (PSI), cyclic electron flow around PSI, and state transitions. PetG is required for either the stability or assembly of the cytochrome b6-f complex. The protein is Cytochrome b6-f complex subunit 5 of Prochlorococcus marinus subsp. pastoris (strain CCMP1986 / NIES-2087 / MED4).